Reading from the N-terminus, the 334-residue chain is Glyceraldehyde-3-phosphate dehydrogenase (334 aa).

NAD(+)-binding positions include 11–12, Asp33, and Ser119; that span reads RI. D-glyceraldehyde 3-phosphate contacts are provided by residues 149–151 and Thr180; that span reads SCT. The Nucleophile role is filled by Cys150. Asn181 provides a ligand contact to NAD(+). Residues Arg197, 210-211, and Arg233 each bind D-glyceraldehyde 3-phosphate; that span reads TG. Asn314 is a binding site for NAD(+).

The protein belongs to the glyceraldehyde-3-phosphate dehydrogenase family. As to quaternary structure, homotetramer.

Its subcellular location is the cytoplasm. It catalyses the reaction D-glyceraldehyde 3-phosphate + phosphate + NAD(+) = (2R)-3-phospho-glyceroyl phosphate + NADH + H(+). Its pathway is carbohydrate degradation; glycolysis; pyruvate from D-glyceraldehyde 3-phosphate: step 1/5. Catalyzes the oxidative phosphorylation of glyceraldehyde 3-phosphate (G3P) to 1,3-bisphosphoglycerate (BPG) using the cofactor NAD. The first reaction step involves the formation of a hemiacetal intermediate between G3P and a cysteine residue, and this hemiacetal intermediate is then oxidized to a thioester, with concomitant reduction of NAD to NADH. The reduced NADH is then exchanged with the second NAD, and the thioester is attacked by a nucleophilic inorganic phosphate to produce BPG. The sequence is that of Glyceraldehyde-3-phosphate dehydrogenase (gap) from Clostridium acetobutylicum (strain ATCC 824 / DSM 792 / JCM 1419 / IAM 19013 / LMG 5710 / NBRC 13948 / NRRL B-527 / VKM B-1787 / 2291 / W).